Reading from the N-terminus, the 644-residue chain is Threonine--tRNA ligase (644 aa).

The 61-residue stretch at 1 to 61 (MPVITLPDGS…EKDTKLTIIT (61 aa)) folds into the TGS domain. The catalytic stretch occupies residues 242 to 535 (DHRRIGADLD…LIEHYEGKFP (294 aa)). Residues C335, H386, and H512 each contribute to the Zn(2+) site.

The protein belongs to the class-II aminoacyl-tRNA synthetase family. In terms of assembly, homodimer. The cofactor is Zn(2+).

The protein resides in the cytoplasm. It carries out the reaction tRNA(Thr) + L-threonine + ATP = L-threonyl-tRNA(Thr) + AMP + diphosphate + H(+). Catalyzes the attachment of threonine to tRNA(Thr) in a two-step reaction: L-threonine is first activated by ATP to form Thr-AMP and then transferred to the acceptor end of tRNA(Thr). Also edits incorrectly charged L-seryl-tRNA(Thr). The protein is Threonine--tRNA ligase of Nitrosococcus oceani (strain ATCC 19707 / BCRC 17464 / JCM 30415 / NCIMB 11848 / C-107).